The sequence spans 304 residues: Cbb3-type cytochrome c oxidase subunit CcoP (304 aa).

2 helical membrane passes run 11 to 31 (LYVAGITVVSLIFCLVVLIVA) and 61 to 81 (WWAGLFLVTIAFAVIYLALYP). 2 consecutive Cytochrome c domains span residues 129 to 209 (QAMA…LSLS) and 216 to 296 (VAAQ…WSLS). Positions 142, 145, 146, 185, 228, 231, 232, and 273 each coordinate heme c.

The protein belongs to the CcoP / FixP family. As to quaternary structure, component of the cbb3-type cytochrome c oxidase at least composed of CcoN, CcoO, CcoQ and CcoP. Heme c is required as a cofactor.

It is found in the cell inner membrane. Its pathway is energy metabolism; oxidative phosphorylation. Its function is as follows. C-type cytochrome. Part of the cbb3-type cytochrome c oxidase complex. CcoP subunit is required for transferring electrons from donor cytochrome c via its heme groups to CcoO subunit. From there, electrons are shuttled to the catalytic binuclear center of CcoN subunit where oxygen reduction takes place. The complex also functions as a proton pump. The chain is Cbb3-type cytochrome c oxidase subunit CcoP from Rubrivivax gelatinosus (Rhodocyclus gelatinosus).